A 38-amino-acid chain; its full sequence is GVPINVPCTGSPQCIKPCKDAGMRFGKCMNRKCHCTPK.

3 disulfides stabilise this stretch: Cys8–Cys28, Cys14–Cys33, and Cys18–Cys35. Positions 26-33 (GKCMNRKC) are interaction with Ca(2+)-activated K(+) channels.

It belongs to the short scorpion toxin superfamily. Potassium channel inhibitor family. Alpha-KTx 03 subfamily. As to expression, expressed by the venom gland.

The protein resides in the secreted. In terms of biological role, potent inhibitor of shaker potassium channels as well as the mammalian homologs of shaker. The protein is Potassium channel toxin alpha-KTx 3.3 of Leiurus hebraeus (Hebrew deathstalker scorpion).